Reading from the N-terminus, the 289-residue chain is ATP synthase gamma chain (289 aa).

The protein belongs to the ATPase gamma chain family. F-type ATPases have 2 components, CF(1) - the catalytic core - and CF(0) - the membrane proton channel. CF(1) has five subunits: alpha(3), beta(3), gamma(1), delta(1), epsilon(1). CF(0) has three main subunits: a, b and c.

It localises to the cell inner membrane. Its function is as follows. Produces ATP from ADP in the presence of a proton gradient across the membrane. The gamma chain is believed to be important in regulating ATPase activity and the flow of protons through the CF(0) complex. This is ATP synthase gamma chain from Actinobacillus succinogenes (strain ATCC 55618 / DSM 22257 / CCUG 43843 / 130Z).